The sequence spans 217 residues: Putative thymidylate synthase (217 aa).

Residue Cys-139 is part of the active site.

This sequence belongs to the thymidylate synthase family. Archaeal-type ThyA subfamily. Monomer.

It localises to the cytoplasm. The protein operates within pyrimidine metabolism; dTTP biosynthesis. Its function is as follows. May catalyze the biosynthesis of dTMP using an unknown cosubstrate. This Methanosarcina mazei (strain ATCC BAA-159 / DSM 3647 / Goe1 / Go1 / JCM 11833 / OCM 88) (Methanosarcina frisia) protein is Putative thymidylate synthase.